The following is a 456-amino-acid chain: tRNA modification GTPase MnmE (456 aa).

(6S)-5-formyl-5,6,7,8-tetrahydrofolate is bound by residues arginine 24, glutamate 81, and lysine 120. The region spanning 216 to 379 (GMTVVIAGRP…LRDHLKACMG (164 aa)) is the TrmE-type G domain. Asparagine 226 serves as a coordination point for K(+). Residues 226-231 (NAGKSS), 245-251 (TEIAGTT), 270-273 (DTAG), and 335-338 (NKAD) each bind GTP. Serine 230 contributes to the Mg(2+) binding site. K(+) contacts are provided by threonine 245, isoleucine 247, and threonine 250. Threonine 251 contacts Mg(2+). Lysine 456 is a binding site for (6S)-5-formyl-5,6,7,8-tetrahydrofolate.

This sequence belongs to the TRAFAC class TrmE-Era-EngA-EngB-Septin-like GTPase superfamily. TrmE GTPase family. As to quaternary structure, homodimer. Heterotetramer of two MnmE and two MnmG subunits. K(+) serves as cofactor.

It localises to the cytoplasm. Its function is as follows. Exhibits a very high intrinsic GTPase hydrolysis rate. Involved in the addition of a carboxymethylaminomethyl (cmnm) group at the wobble position (U34) of certain tRNAs, forming tRNA-cmnm(5)s(2)U34. In Pseudomonas fluorescens (strain Pf0-1), this protein is tRNA modification GTPase MnmE.